The primary structure comprises 276 residues: Secretagogin (276 aa).

EF-hand domains lie at 12–47 (LDAA…MLMK), 58–93 (NLHK…EDEN), 105–140 (DSSV…LFLH), 149–184 (KLEE…QENF), 197–232 (ERKR…MMEL), and 240–276 (VDLD…KINP). Ca(2+)-binding residues include Asp-25, Asp-27, Tyr-31, Glu-36, Asp-71, Ser-73, Asp-75, Arg-77, Glu-82, Asp-118, Asp-120, Ser-122, Glu-129, Asp-162, Asn-164, Asp-166, Arg-168, Asp-173, Asp-210, Ser-212, Thr-214, Glu-221, Asp-254, Asn-256, Asp-258, Lys-260, and Glu-265.

In terms of tissue distribution, expressed at high levels in the pancreatic islets of Langerhans and to a much lesser extent in the gastrointestinal tract (stomach, small intestine and colon), the adrenal medulla and cortex and the thyroid C-cells. In the brain, the expression is restricted to distinct subtypes of neurons with highest expression in the molecular layer of the cerebellum (stellate and basket cells), in the anterior part of the pituitary gland, in the thalamus, in the hypothalamus and in a subgroup of neocortical neurons.

Its subcellular location is the cytoplasm. It localises to the secreted. The protein resides in the cytoplasmic vesicle. It is found in the secretory vesicle membrane. The chain is Secretagogin (SCGN) from Homo sapiens (Human).